Reading from the N-terminus, the 391-residue chain is GDP-mannose transporter (391 aa).

Positions 1–11 (MDDKKNEDVEM) are enriched in basic and acidic residues. The tract at residues 1-28 (MDDKKNEDVEMRNFNGRSSPSQRDPFIS) is disordered. At 1–44 (MDDKKNEDVEMRNFNGRSSPSQRDPFISKPGAAKRGGSSFDLSN) the chain is on the cytoplasmic side. Residues 45–65 (VTNSPGISILAYCLASISMTV) form a helical membrane-spanning segment. The Lumenal segment spans residues 66–75 (TNKYCVSGSN). Residues 76–96 (WNLNFFYLAIQSVVCIIAIII) traverse the membrane as a helical segment. The Cytoplasmic segment spans residues 97 to 115 (CKQAGLITNLAPFDTKKAK). The helical transmembrane segment at 116-138 (TWFPISLLLVGMIYTSTKALQFL) threads the bilayer. Topologically, residues 139–141 (SVP) are lumenal. Residues 142–164 (VYTIFKNLTIIVIAYGEVLWFGG) form a helical membrane-spanning segment. The Cytoplasmic segment spans residues 165–170 (SVTPSA). The chain crosses the membrane as a helical span at residues 171–193 (LFSFGLMVLSSVVAAWADIQHAL). Residues 194–209 (YGGGATQTKEAADALS) are Lumenal-facing. A helical transmembrane segment spans residues 210–230 (TLNAGYAWMGMNVFCTAAYVL). Over 231–245 (SMRKVIKKMNFKDWD) the chain is Cytoplasmic. The helical transmembrane segment at 246-266 (TMFYNNLLTIPVLFVCSFVFE) threads the bilayer. N-linked (GlcNAc...) asparagine glycosylation is found at Asn-267 and Asn-272. Residues 267–284 (NWSSENLTKNFPLETRNN) are Lumenal-facing. A helical transmembrane segment spans residues 285-305 (LILGMIYSGLATIFISYCSAW). The Cytoplasmic segment spans residues 306–313 (CIRVTSST). Residues 314–336 (TYSMVGALNKLPIAVSGLVFFAA) form a helical membrane-spanning segment. Residues 337–339 (PVT) are Lumenal-facing. A helical transmembrane segment spans residues 340 to 359 (FGSVSAIFIGFVSGIVYAWA). At 360 to 391 (KVRQNQSKGSVLPTTQPVMSASSQSNRDAAKA) the chain is on the cytoplasmic side. Positions 369–391 (SVLPTTQPVMSASSQSNRDAAKA) are disordered.

It belongs to the TPT transporter family. SLC35D subfamily. Homooligomer.

It localises to the golgi apparatus membrane. The protein localises to the cytoplasmic vesicle membrane. The protein resides in the endoplasmic reticulum membrane. Functionally, involved in the import of GDP-mannose from the cytoplasm into the Golgi lumen. The polypeptide is GDP-mannose transporter (vrg4) (Sclerotinia sclerotiorum (strain ATCC 18683 / 1980 / Ss-1) (White mold)).